Here is a 430-residue protein sequence, read N- to C-terminus: GTPase Obg (430 aa).

Residues 1–158 (MFIDTAKVFV…LNIVLELKLL (158 aa)) form the Obg domain. Residues 159-331 (ADVGLLGFPN…VMKEAARILK (173 aa)) enclose the OBG-type G domain. GTP contacts are provided by residues 165 to 172 (GFPNVGKS), 190 to 194 (FTTLK), 212 to 215 (DIPG), 282 to 285 (NKSD), and 312 to 314 (SAA). Positions 172 and 192 each coordinate Mg(2+). The OCT domain occupies 345–430 (MYIPEEKRFT…LNDFEFEYIL (86 aa)).

The protein belongs to the TRAFAC class OBG-HflX-like GTPase superfamily. OBG GTPase family. In terms of assembly, monomer. Requires Mg(2+) as cofactor.

Its subcellular location is the cytoplasm. An essential GTPase which binds GTP, GDP and possibly (p)ppGpp with moderate affinity, with high nucleotide exchange rates and a fairly low GTP hydrolysis rate. Plays a role in control of the cell cycle, stress response, ribosome biogenesis and in those bacteria that undergo differentiation, in morphogenesis control. This Clostridium beijerinckii (strain ATCC 51743 / NCIMB 8052) (Clostridium acetobutylicum) protein is GTPase Obg.